A 239-amino-acid chain; its full sequence is Lipoprotein-releasing system ATP-binding protein LolD (239 aa).

The ABC transporter domain occupies 14-239 (IRAERLGKTY…KLRELAPSAV (226 aa)). 50–57 (GASGAGKS) serves as a coordination point for ATP.

This sequence belongs to the ABC transporter superfamily. Lipoprotein translocase (TC 3.A.1.125) family. The complex is composed of two ATP-binding proteins (LolD) and two transmembrane proteins (LolC and LolE).

It localises to the cell inner membrane. In terms of biological role, part of the ABC transporter complex LolCDE involved in the translocation of mature outer membrane-directed lipoproteins, from the inner membrane to the periplasmic chaperone, LolA. Responsible for the formation of the LolA-lipoprotein complex in an ATP-dependent manner. This Xanthomonas campestris pv. campestris (strain 8004) protein is Lipoprotein-releasing system ATP-binding protein LolD.